Here is a 120-residue protein sequence, read N- to C-terminus: Ribonuclease P protein component 2 (120 aa).

The protein belongs to the eukaryotic/archaeal RNase P protein component 2 family. As to quaternary structure, consists of a catalytic RNA component and at least 4-5 protein subunits.

The protein localises to the cytoplasm. The catalysed reaction is Endonucleolytic cleavage of RNA, removing 5'-extranucleotides from tRNA precursor.. Functionally, part of ribonuclease P, a protein complex that generates mature tRNA molecules by cleaving their 5'-ends. The chain is Ribonuclease P protein component 2 from Thermococcus gammatolerans (strain DSM 15229 / JCM 11827 / EJ3).